A 229-amino-acid chain; its full sequence is Probable ribonuclease H (229 aa).

The 123-residue stretch at 42-164 (LQDISLEFDK…ADFLANSAAK (123 aa)) folds into the RNase H type-1 domain. The a divalent metal cation site is built by Glu-60, Asp-87, and Asp-156.

It belongs to the RNase H family. Requires a divalent metal cation as cofactor.

The catalysed reaction is Endonucleolytic cleavage to 5'-phosphomonoester.. Endonuclease that specifically degrades the RNA of RNA-DNA hybrids. The protein is Probable ribonuclease H (RNH1) of Acanthamoeba polyphaga mimivirus (APMV).